Here is a 153-residue protein sequence, read N- to C-terminus: General odorant-binding protein lush (153 aa).

The N-terminal stretch at 1–29 (MKHWKRRSSAVFAIVLQVLVLLLPDPAVA) is a signal peptide. Cystine bridges form between Cys46-Cys79, Cys75-Cys132, and Cys121-Cys141. 2 residues coordinate 1-propanol: Ser81 and Thr86. Positions 81 and 86 each coordinate butan-1-ol. The ethanol site is built by Ser81 and Thr86.

It belongs to the PBP/GOBP family. As to expression, specifically expressed in chemosensory system in both males and females. Expressed in a subset of trichoid chemosensory sensilla located on the ventral-lateral surface of the third antennal segment. Secreted from non-neuronal support cells into the sensillum lymph that bathes the olfactory neurons within these sensilla.

Its subcellular location is the secreted. Odorant-binding protein required for olfactory behavior and for activity of pheromone-sensitive neurons. Binds to alcohols and mediates avoidance behavior to high concentrations of alcohols, the alcohol-binding possibly resulting in activation of receptors on T2B neurons, the activation of these receptors inhibiting these neurons. Acts in concert with Snmp and lush to capture cVA molecules on the surface of Or67d expressing olfactory dendrites and facilitate their transfer to the odorant-receptor Orco complex. Required for cVA response, probably by binding to VA. May act by serving as an adapter that bridges the presence of gaseous pheromone molecules, cVA, to activation of specific neuronal receptors expressed on T1 olfactory neurons, possibly via a specific conformational change induced by cVA that in turn activates T1 receptors. T1 neurons are excited by the pheromone VA, while T2 neurons are inhibited by alcohols. Also binds to phthalates. This is General odorant-binding protein lush (lush) from Drosophila melanogaster (Fruit fly).